Here is a 143-residue protein sequence, read N- to C-terminus: Sperm mitochondrial-associated cysteine-rich protein (143 aa).

Residues serine 37, serine 44, and serine 110 each carry the phosphoserine modification. The disordered stretch occupies residues 101–143 (CCSSENKTESDSDTSGQTLEKGSQSPQSPPGAQGNWNQKKSNK). Positions 113–126 (DTSGQTLEKGSQSP) are enriched in polar residues. A Phosphoserine modification is found at serine 128. Positions 134-143 (GNWNQKKSNK) are enriched in polar residues.

As to expression, testis. Is selectively expressed in the spermatids of seminiferous tubules.

It is found in the cytoplasm. The protein localises to the mitochondrion membrane. Its function is as follows. Involved in sperm motility. Its absence is associated with genetic background dependent male infertility. Infertility may be due to reduced sperm motility in the female reproductive tract and inability to penetrate the oocyte zona pellucida. In Mus musculus (Mouse), this protein is Sperm mitochondrial-associated cysteine-rich protein (Smcp).